Reading from the N-terminus, the 356-residue chain is Torsin-like protein (356 aa).

The N-terminal stretch at 1 to 18 (MKLDYVLLLLFHLCFVNT) is a signal peptide. 110–117 (GYTGSGKN) is an ATP binding site. Asparagine 125 and asparagine 250 each carry an N-linked (GlcNAc...) asparagine glycan.

The protein belongs to the ClpA/ClpB family. Torsin subfamily.

The protein localises to the endoplasmic reticulum lumen. May serve as a molecular chaperone assisting in the proper folding of secreted and/or membrane proteins. The sequence is that of Torsin-like protein (ooc-5) from Caenorhabditis elegans.